Here is a 401-residue protein sequence, read N- to C-terminus: Chorismate synthase (401 aa).

NADP(+) contacts are provided by arginine 40 and arginine 46. Residues 135 to 137, 256 to 257, glycine 300, 315 to 319, and arginine 341 contribute to the FMN site; these read RAS, QA, and KPIST.

This sequence belongs to the chorismate synthase family. As to quaternary structure, homotetramer. Requires FMNH2 as cofactor.

The catalysed reaction is 5-O-(1-carboxyvinyl)-3-phosphoshikimate = chorismate + phosphate. Its pathway is metabolic intermediate biosynthesis; chorismate biosynthesis; chorismate from D-erythrose 4-phosphate and phosphoenolpyruvate: step 7/7. Catalyzes the anti-1,4-elimination of the C-3 phosphate and the C-6 proR hydrogen from 5-enolpyruvylshikimate-3-phosphate (EPSP) to yield chorismate, which is the branch point compound that serves as the starting substrate for the three terminal pathways of aromatic amino acid biosynthesis. This reaction introduces a second double bond into the aromatic ring system. In Mycobacterium avium (strain 104), this protein is Chorismate synthase.